A 136-amino-acid polypeptide reads, in one-letter code: Salivary protein 15 Iric-2 (136 aa).

An N-terminal signal peptide occupies residues 1-22 (MESFVAMKVVCIVLLFVIAAEA). The N-linked (GlcNAc...) asparagine glycan is linked to Asn105. The segment at 117–136 (GPKNQTCENKDQCVPHIPGC) is CD4-binding.

This sequence belongs to the salp15 family. As to quaternary structure, interacts with host CD4. Interacts with host DC-SIGN (CD209). Interacts with Borrelia outer surface protein C (OspC). In terms of tissue distribution, expressed in salivary glands. Detected in fed adult female.

The protein localises to the secreted. Functionally, salivary tick protein that downregulates host immune system by binding to both dendritic cells, and CD4(+) T cells. Specifically binds to the CD4 coreceptor on T cells. This interaction prevents the activation of the Src kinase, Lck, and its downstream substrate Zap-70, and results in deficient activation of PLCgamma1, the repression of calcium fluxes triggered by T-cell antigen receptor (TCR) ligation, and a subsequent reduction in interleukin-2 production. This salivary protein also binds to DC-SIGN (CD209) on dendritic cells (DC) and activates the Raf-1 kinase/MEK signaling pathway that results in down-regulating expression of pro-inflammatory cytokines. Furthermore, it inhibits T cell proliferation induced by DCs. In addition, it inhibits in vitro keratinocyte inflammation induced by Borrelia burgdorferi or by the major outer surface protein (OspC) of Borrelia. In addition, it downregulates chemokines and monocyte chemoattractant protein 1, as well as several antimicrobial peptides such as defensins, cathelicidin, psoriasin, and RNase 7. Apart from its immunomodulatory activities, it is also associated with protection of Borrelia spirochetes from antibody-mediated killing through its binding to OspC. In vivo, tests on different immune disease animal models show promising therapeutic results, e.g., in inhibiting HIV infection, experimental autoimmune encephalomyelitis, transplantation rejection, and asthma. The polypeptide is Salivary protein 15 Iric-2 (Ixodes ricinus (Common tick)).